Reading from the N-terminus, the 933-residue chain is Phosphoenolpyruvate carboxylase (933 aa).

Catalysis depends on residues His164 and Lys595.

The protein belongs to the PEPCase type 1 family. Requires Mg(2+) as cofactor.

It carries out the reaction oxaloacetate + phosphate = phosphoenolpyruvate + hydrogencarbonate. In terms of biological role, forms oxaloacetate, a four-carbon dicarboxylic acid source for the tricarboxylic acid cycle. The protein is Phosphoenolpyruvate carboxylase of Rhodopseudomonas palustris (strain HaA2).